Consider the following 739-residue polypeptide: Trehalose phosphorylase (739 aa).

Residues Met1–Ser26 constitute a propeptide that is removed on maturation. The interval Met1 to Gln28 is disordered.

The protein belongs to the glycosyltransferase group 1 family. Glycosyltransferase 4 subfamily. In terms of assembly, homodimer.

The catalysed reaction is alpha,alpha-trehalose + phosphate = alpha-D-glucose + alpha-D-glucose 1-phosphate. Its function is as follows. Reversibly catalyzes the synthesis and degradation of trehalose from glucose and alpha-D-glucose 1-phosphate. The equilibrium lies in the direction of trehalose synthesis. This Pleurotus pulmonarius (Indian oyster mushroom) protein is Trehalose phosphorylase.